We begin with the raw amino-acid sequence, 331 residues long: 3-dehydrosphinganine reductase TSC10B (331 aa).

The Lumenal segment spans residues 1–7; it reads MAAIFSL. A helical transmembrane segment spans residues 8-28; sequence FLFFILFIVSLLIILSFIVRP. Residues 29–262 are Cytoplasmic-facing; the sequence is RSVTIPIKFR…ICFDGIKAGK (234 aa). Residues glycine 44, serine 46, serine 47, glycine 48, arginine 69, lysine 73, and aspartate 95 each coordinate NADPH. Positions 44–48 match the GXSXG motif; the sequence is GGSSG. Catalysis depends on serine 172, which acts as the Proton donor. Tyrosine 186 functions as the Proton acceptor in the catalytic mechanism. Positions 186 and 190 each coordinate NADP(+). Lysine 190 acts as the Lowers pKa of active site Tyr in catalysis. A helical transmembrane segment spans residues 263-283; it reads FTVTCHFIGFLLSIASTGMSP. Residues 284-286 lie on the Lumenal side of the membrane; the sequence is QGS. The chain crosses the membrane as a helical span at residues 287 to 307; the sequence is FWLALTEVMFGGLIRLASLVF. Residues 308-331 are Cytoplasmic-facing; sequence QWQWYKTIEKWSQRNKKEVNSKLA.

Belongs to the short-chain dehydrogenases/reductases (SDR) family. Expressed in roots, leaves, stems and flowers.

The protein localises to the endoplasmic reticulum membrane. It carries out the reaction sphinganine + NADP(+) = 3-oxosphinganine + NADPH + H(+). Its pathway is lipid metabolism; sphingolipid metabolism. In terms of biological role, catalyzes the reduction of 3'-oxosphinganine (3-ketodihydrosphingosine/KDS) to sphinganine (dihydrosphingosine/DHS), the second step of de novo sphingolipid biosynthesis. In plants, sphingolipids seems to play a critical role in mineral ion homeostasis, most likely through their involvement in the ion transport functionalities of membrane systems in the root. Is stereospecific for D-erythro-DHS production and does not produce L-threo-DHS. The protein is 3-dehydrosphinganine reductase TSC10B (TSC10B) of Arabidopsis thaliana (Mouse-ear cress).